The following is a 205-amino-acid chain: Protein N-terminal glutamine amidohydrolase (205 aa).

Catalysis depends on residues Cys20, His74, and Asp90.

The protein belongs to the NTAQ1 family. In terms of assembly, monomer.

It catalyses the reaction N-terminal L-glutaminyl-[protein] + H2O = N-terminal L-glutamyl-[protein] + NH4(+). Functionally, mediates the side-chain deamidation of N-terminal glutamine residues to glutamate, an important step in N-end rule pathway of protein degradation. Conversion of the resulting N-terminal glutamine to glutamate renders the protein susceptible to arginylation, polyubiquitination and degradation as specified by the N-end rule. Does not act on substrates with internal or C-terminal glutamine and does not act on non-glutamine residues in any position. This is Protein N-terminal glutamine amidohydrolase (tun) from Drosophila ananassae (Fruit fly).